Reading from the N-terminus, the 390-residue chain is Leu/Ile/Val-binding protein homolog 6 (390 aa).

The first 21 residues, 1-21 (MKKIALTALAVFSLAASAAYA), serve as a signal peptide directing secretion.

This sequence belongs to the leucine-binding protein family.

Functionally, component of an amino-acid transport system. The polypeptide is Leu/Ile/Val-binding protein homolog 6 (Brucella abortus (strain 2308)).